The chain runs to 417 residues: Tyrosine--tRNA ligase (417 aa).

Residue Y39 participates in L-tyrosine binding. A 'HIGH' region motif is present at residues 44-53 (ATATSLHIGN). Y176 and Q180 together coordinate L-tyrosine. Positions 236-240 (KMGKS) match the 'KMSKS' region motif. K239 provides a ligand contact to ATP. Residues 350–416 (IGILSLLVTA…GKKKHVLVRP (67 aa)) form the S4 RNA-binding domain.

The protein belongs to the class-I aminoacyl-tRNA synthetase family. TyrS type 1 subfamily. In terms of assembly, homodimer.

Its subcellular location is the cytoplasm. It carries out the reaction tRNA(Tyr) + L-tyrosine + ATP = L-tyrosyl-tRNA(Tyr) + AMP + diphosphate + H(+). Catalyzes the attachment of tyrosine to tRNA(Tyr) in a two-step reaction: tyrosine is first activated by ATP to form Tyr-AMP and then transferred to the acceptor end of tRNA(Tyr). The chain is Tyrosine--tRNA ligase from Mesorhizobium japonicum (strain LMG 29417 / CECT 9101 / MAFF 303099) (Mesorhizobium loti (strain MAFF 303099)).